The chain runs to 397 residues: Argininosuccinate synthase (397 aa).

7–15 (AFSGGLDTT) lines the ATP pocket. Tyr-84 is an L-citrulline binding site. Gly-114 contacts ATP. Positions 116, 120, and 121 each coordinate L-aspartate. L-citrulline is bound at residue Asn-120. Positions 124, 170, 179, 254, and 266 each coordinate L-citrulline.

Belongs to the argininosuccinate synthase family. Type 1 subfamily. In terms of assembly, homotetramer.

It is found in the cytoplasm. It catalyses the reaction L-citrulline + L-aspartate + ATP = 2-(N(omega)-L-arginino)succinate + AMP + diphosphate + H(+). The protein operates within amino-acid biosynthesis; L-arginine biosynthesis; L-arginine from L-ornithine and carbamoyl phosphate: step 2/3. The chain is Argininosuccinate synthase from Haloquadratum walsbyi (strain DSM 16790 / HBSQ001).